The primary structure comprises 184 residues: Photosystem I assembly protein Ycf4 (184 aa).

2 consecutive transmembrane segments (helical) span residues 22-42 and 57-77; these read FCWA…GTSS and ILFF…LFIS.

The protein belongs to the Ycf4 family.

It is found in the plastid. Its subcellular location is the chloroplast thylakoid membrane. In terms of biological role, seems to be required for the assembly of the photosystem I complex. The sequence is that of Photosystem I assembly protein Ycf4 from Panax ginseng (Korean ginseng).